A 733-amino-acid chain; its full sequence is Non-secreted LysM effector LCP1 (733 aa).

Positions 1 to 22 are cleaved as a signal peptide; sequence MMRRPWLLSALVAWVKLPSVQG. LysM domains lie at 211–256 and 261–309; these read SEYT…KLCI and DVYV…TICI. Residues Asn-298, Asn-304, Asn-340, Asn-350, Asn-381, Asn-432, Asn-442, Asn-455, and Asn-538 are each glycosylated (N-linked (GlcNAc...) asparagine). One can recognise a LysM 3 domain in the interval 347–393; the sequence is LFHNVTAGDDCGTIGLKYSISLDDFIFLNSMIWPNCTNLWLRASYCV. Positions 605–629 are enriched in low complexity; it reads SPITSSAPTSTTASSKTSSSAAQPT. A disordered region spans residues 605 to 637; that stretch reads SPITSSAPTSTTASSKTSSSAAQPTNVSTDGTC. Asn-630 carries an N-linked (GlcNAc...) asparagine glycan. Chitin-binding type-1 domains lie at 634–680 and 688–733; these read DGTC…KCDA and DGTC…GVCT. Cystine bridges form between Cys-637/Cys-654, Cys-645/Cys-660, Cys-653/Cys-667, Cys-671/Cys-678, Cys-691/Cys-708, Cys-699/Cys-714, Cys-707/Cys-721, and Cys-725/Cys-732.

It belongs to the secreted LysM effector family.

The protein localises to the secreted. Its subcellular location is the cell membrane. It is found in the vacuole. Functionally, secreted effector that enables the plant pathogenic fungus to manipulate host defenses for successful infection. Not involved in host recognition and penetration but suppresses host cell death and promotes fumonisin biosynthesis while the pathogen colonizes maize kernels. The sequence is that of Non-secreted LysM effector LCP1 from Gibberella moniliformis (strain M3125 / FGSC 7600) (Maize ear and stalk rot fungus).